The following is a 223-amino-acid chain: Protein Mis18-alpha (223 aa).

The interval 1-30 (MAGTFSLEPCSTSSSCNHQGKRSESSLLEK) is disordered. The span at 9–18 (PCSTSSSCNH) shows a compositional bias: polar residues. Basic and acidic residues predominate over residues 21–30 (KRSESSLLEK). 3 positions are modified to phosphoserine: Ser-33, Ser-36, and Ser-37. Residues 71 to 169 (PLVFLCTRCR…SVEAVESYTL (99 aa)) enclose the Mis18 domain. Residues Cys-76, Cys-79, Cys-132, and Cys-135 each contribute to the Zn(2+) site. A Glycyl lysine isopeptide (Lys-Gly) (interchain with G-Cter in SUMO2) cross-link involves residue Lys-153. Ser-223 bears the Phosphoserine mark.

It belongs to the mis18 family. In terms of assembly, homodimer, and heterodimer with OIP5/MIS18B. Identified in a complex containing MIS18A, OIP5/MIS18B, MIS18BP1, RBBP7 and RBBP4.

The protein localises to the nucleus. The protein resides in the chromosome. It is found in the centromere. Functionally, required for recruitment of CENPA to centromeres and normal chromosome segregation during mitosis. This is Protein Mis18-alpha (Mis18a) from Rattus norvegicus (Rat).